Reading from the N-terminus, the 138-residue chain is Small ribosomal subunit protein uS11 (138 aa).

It belongs to the universal ribosomal protein uS11 family. As to quaternary structure, part of the 30S ribosomal subunit.

Functionally, located on the platform of the 30S subunit. In Pyrobaculum arsenaticum (strain DSM 13514 / JCM 11321 / PZ6), this protein is Small ribosomal subunit protein uS11.